Reading from the N-terminus, the 397-residue chain is ATP-dependent RNA helicase eIF4A (397 aa).

The Q motif motif lies at 24–52 (DSFDDMNLKSELLRGIYAYGFERPSAIQQ). The Helicase ATP-binding domain occupies 55-225 (IMPVIKGHDV…TKFMRDPVRI (171 aa)). 68–75 (AQSGTGKT) is a binding site for ATP. The DEAD box motif lies at 173–176 (DEAD). Residues 236–397 (GIKQFYIAVE…EMPMNVADLI (162 aa)) enclose the Helicase C-terminal domain.

Belongs to the DEAD box helicase family. eIF4A subfamily. Component of the eIF4F complex, which composition varies with external and internal environmental conditions. It is composed of at least eIF4A, eIF4E and eIF4G.

The protein resides in the cytoplasm. The catalysed reaction is ATP + H2O = ADP + phosphate + H(+). Its function is as follows. ATP-dependent RNA helicase which is a subunit of the eIF4F complex involved in cap recognition and is required for mRNA binding to ribosome. In the current model of translation initiation, eIF4A unwinds RNA secondary structures in the 5'-UTR of mRNAs which is necessary to allow efficient binding of the small ribosomal subunit, and subsequent scanning for the initiator codon. In Chaetomium globosum (strain ATCC 6205 / CBS 148.51 / DSM 1962 / NBRC 6347 / NRRL 1970) (Soil fungus), this protein is ATP-dependent RNA helicase eIF4A (TIF1).